A 208-amino-acid chain; its full sequence is Dephospho-CoA kinase (208 aa).

Residues 5 to 201 (IVALTGGIGS…QRYLALAASA (197 aa)) form the DPCK domain. 13–18 (GSGKST) serves as a coordination point for ATP.

Belongs to the CoaE family.

It is found in the cytoplasm. It carries out the reaction 3'-dephospho-CoA + ATP = ADP + CoA + H(+). It functions in the pathway cofactor biosynthesis; coenzyme A biosynthesis; CoA from (R)-pantothenate: step 5/5. Catalyzes the phosphorylation of the 3'-hydroxyl group of dephosphocoenzyme A to form coenzyme A. This Sodalis glossinidius (strain morsitans) protein is Dephospho-CoA kinase.